Here is a 335-residue protein sequence, read N- to C-terminus: Serpentine receptor class alpha-13 (335 aa).

The Extracellular portion of the chain corresponds to 1–25; sequence MAIISSVNRTCASESLLELYRSYKY. A helical transmembrane segment spans residues 26 to 46; the sequence is ILSTSFNIIIPIISLFFLVYA. Topologically, residues 47-61 are cytoplasmic; it reads IKQLCAQSIIQYSTR. A helical transmembrane segment spans residues 62–82; the sequence is VLLITTILFAVCHQIAYFCFK. Topologically, residues 83–108 are extracellular; it reads ADLLYTMLFKLDQPCNLQHSSYDCRF. Residues 109–129 form a helical membrane-spanning segment; it reads ITIATTTSNCGMALVQLAMSI. At 130 to 146 the chain is on the cytoplasmic side; it reads DRVFALKFNRVYYKLKS. The helical transmembrane segment at 147-167 threads the bilayer; sequence IPGITLALITLSISFSMFFIL. At 168-192 the chain is on the extracellular side; it reads TIDDPLSGYVNHCGFYPTYSQDKFH. A helical membrane pass occupies residues 193-213; sequence IFLDVTLYLAVFNFVFDIGLM. Residues 214-243 lie on the Cytoplasmic side of the membrane; that stretch reads YYSYQEILWKRSYSFVNRFQSRISLKCTQA. The helical transmembrane segment at 244 to 264 threads the bilayer; that stretch reads IFIISICQCISNVLYSGLLSL. Over 265-278 the chain is Extracellular; that stretch reads LMKLGRYMSSADYN. Residues 279–299 form a helical membrane-spanning segment; sequence LSLSLAYTTPYSCLILPILIC. Topologically, residues 300–335 are cytoplasmic; the sequence is KVLEYIKKQRTVGILSLRNQKQSMEGHMAMINSAWK.

The protein belongs to the nematode receptor-like protein sra family. In terms of tissue distribution, expressed in the AWA and AWC chemosensory neurons.

The protein resides in the membrane. Its function is as follows. Chemosensory receptor that negatively regulates RAS/MAPK signaling during vulva induction and the negative regulation of olfaction of volitile attractants. Required for the suppression of vulval induction in response to food starvation. Signaling acts through the GPA-5 G-alpha protein subunit. This Caenorhabditis elegans protein is Serpentine receptor class alpha-13 (sra-13).